The primary structure comprises 86 residues: Kappa-theraphotoxin-Cg1a 5 (86 aa).

A signal peptide spans Met-1–Ala-21. Residues Ala-22–Arg-50 constitute a propeptide that is removed on maturation. 3 disulfides stabilise this stretch: Cys-52–Cys-66, Cys-59–Cys-71, and Cys-65–Cys-78. The residue at position 84 (Phe-84) is a Phenylalanine amide.

It belongs to the neurotoxin 10 (Hwtx-1) family. 28 (Jztx-11) subfamily. Expressed by the venom gland.

It is found in the secreted. In terms of biological role, this toxin acts as a voltage-dependent gating-modifier. It inhibits the sodium conductance (IC(50)=124 nM) and slows the fast inactivation (EC(50)=1180 nM) of Nav1.5/SCN5A. It significantly shifts the activation to more depolarized voltages and decreases the deactivation of Nav1.5 currents upon extreme depolarization, but only slightly affects voltage-dependence of steady-state inactivation. In addition, this toxin causes an approximately five-fold decrease in the rate of recovery from inactivation and an approximately 1.9-fold reduction in the closed-state inactivation rate. This toxin integrates the functions of site 3 toxins (alpha-scorpion toxins) with site 4 toxins (beta-scorpion and spider toxins) by targeting multiple sites on Nav1.5. Also shows inhibition of voltage-gated potassium channels (5 uM completely inhibits Kv2.1/KCNB1, whereas 5 uM moderately inhibits Kv4.2/KCND2 Kv4.1/KCND1 channels). This Chilobrachys guangxiensis (Chinese earth tiger tarantula) protein is Kappa-theraphotoxin-Cg1a 5.